The sequence spans 259 residues: Tonin (259 aa).

An N-terminal signal peptide occupies residues 1 to 18 (MWLQILSLVLSVGRIDAA). The propeptide at 19–24 (PPGQSR) is activation peptide. The Peptidase S1 domain maps to 25–256 (IVGGYKCEKN…FTSWIKKVMK (232 aa)). Cystine bridges form between C31-C171, C48-C64, C150-C217, C182-C196, and C207-C232. The active-site Charge relay system is the H63. Zn(2+) is bound at residue H63. N-linked (GlcNAc...) asparagine glycosylation is present at N106. Positions 113 and 115 each coordinate Zn(2+). D118 functions as the Charge relay system in the catalytic mechanism. N189 is a glycosylation site (N-linked (GlcNAc...) asparagine). The Charge relay system role is filled by S211.

This sequence belongs to the peptidase S1 family. Kallikrein subfamily. In terms of assembly, monomer. Zn(2+) serves as cofactor. As to expression, found in submaxillary gland.

The catalysed reaction is Preferential cleavage of Arg-|-Xaa bonds in small molecule substrates. Highly selective action to release kallidin (lysyl-bradykinin) from kininogen involves hydrolysis of Met-|-Xaa or Leu-|-Xaa.. Functionally, this protein has both trypsin- and chymotrypsin-like activities, being able to release angiotensin II from angiotensin I or angiotensinogen. In Rattus norvegicus (Rat), this protein is Tonin (Klk2).